The sequence spans 286 residues: Neuferricin homolog (286 aa).

A signal peptide spans 1–23 (MFGFVKYLFKLQFLFILAAVLAG). The region spanning 61-145 (ATVLTSAELS…KPNDLLGLAN (85 aa)) is the Cytochrome b5 heme-binding domain. A coiled-coil region spans residues 176 to 200 (HKYLALLEQAQIAKAEVDELRSKYP).

It belongs to the cytochrome b5 family. MAPR subfamily.

It is found in the secreted. Heme-binding protein. The protein is Neuferricin homolog of Drosophila pseudoobscura pseudoobscura (Fruit fly).